A 214-amino-acid chain; its full sequence is UPF0502 protein Pput_3252 (214 aa).

Belongs to the UPF0502 family.

The sequence is that of UPF0502 protein Pput_3252 from Pseudomonas putida (strain ATCC 700007 / DSM 6899 / JCM 31910 / BCRC 17059 / LMG 24140 / F1).